The following is a 396-amino-acid chain: S-adenosylmethionine synthase (396 aa).

H16 serves as a coordination point for ATP. D18 contributes to the Mg(2+) binding site. A K(+)-binding site is contributed by E44. 2 residues coordinate L-methionine: E57 and Q100. Residues 100-110 (QSVDINQGVDR) form a flexible loop region. ATP contacts are provided by residues 165–167 (DAK), 231–232 (KF), D240, 246–247 (RK), A263, and K267. D240 serves as a coordination point for L-methionine. K271 contributes to the L-methionine binding site.

The protein belongs to the AdoMet synthase family. As to quaternary structure, homotetramer; dimer of dimers. It depends on Mg(2+) as a cofactor. K(+) is required as a cofactor.

It localises to the cytoplasm. The enzyme catalyses L-methionine + ATP + H2O = S-adenosyl-L-methionine + phosphate + diphosphate. Its pathway is amino-acid biosynthesis; S-adenosyl-L-methionine biosynthesis; S-adenosyl-L-methionine from L-methionine: step 1/1. Functionally, catalyzes the formation of S-adenosylmethionine (AdoMet) from methionine and ATP. The overall synthetic reaction is composed of two sequential steps, AdoMet formation and the subsequent tripolyphosphate hydrolysis which occurs prior to release of AdoMet from the enzyme. The protein is S-adenosylmethionine synthase of Azotobacter vinelandii (strain DJ / ATCC BAA-1303).